Here is a 50-residue protein sequence, read N- to C-terminus: Monellin chain B (50 aa).

As to quaternary structure, heterodimer of an A chain and a B chain.

Its function is as follows. Taste-modifying protein; intensely sweet-tasting protein. In Dioscoreophyllum cumminsii (Serendipity berry), this protein is Monellin chain B.